The following is a 711-amino-acid chain: MPKPRMSWPYQRHRQASSPPHPHKEMNFFPQQPLPLGAGPGQMTFPLNWQMGGKDLTKGLNMLTLSPQQPGGKSGQQTSKGPENNLYSPFEEKVRPCIDLIDSLRALGVEQDLALPTIAVIGDQSSGKSSVLEALSGVPLPRGSGIITRCPLALRLKKKECPWQGRISYRKVELQLQDPSQVEREIRKAQDAIAGSGVGISHELISLEVTSPEVPDLTLIDLPGITRVAVGNQPQDIGLQIKALIRKYIQEQQTINLVVVPCNVDIATTEALRMAQEVDPEGDRTIGILTKPDLVDTGAEKVVLNVMQNLTYHLKKGYMIVKCRGQQEILNKLSLAEATKREIAFFHSHPHFRILLEEGKATVPRLAERLTVELIGHISKSLPLLFSQIKEIHQSATEELRLCGASVPSNDADKMFFLIEKIKVFNQDIENLAEGEEIVKEKEARLYNKIREEFKSWIVTLDCNSKKVKNIIHEEVSKYDRQYRGKELMGFVSYKTFESIVRQYLEELVDPALGMLQTVVEIVRQTFSDTAQKNFGEFSNLNQTTQNKVDSIAARAAERAEGLIRLQFRMEQLVFCQDDIYRVDLKAVREELFNPVAEHPQSLQLRLPFVNGPSPVSSITEIGVHVNAYFMGTSQRLANQIPFIIQYCVLQESRDHLQKAMMQMLQGREQYSWLLQEESHTSAKRHFLKEKIHRLAEARHTLSKFAQSLQG.

Disordered regions lie at residues 1-26 and 62-88; these read MPKPRMSWPYQRHRQASSPPHPHKEM and MLTLSPQQPGGKSGQQTSKGPENNLYS. Residues 66-82 are compositionally biased toward low complexity; it reads SPQQPGGKSGQQTSKGP. A Dynamin-type G domain is found at 112-383; that stretch reads DLALPTIAVI…LIGHISKSLP (272 aa). The G1 motif stretch occupies residues 122-129; the sequence is GDQSSGKS. 122–129 is a GTP binding site; sequence GDQSSGKS. The interval 147-149 is G2 motif; that stretch reads ITR. The interval 221–224 is G3 motif; it reads DLPG. Residues 221 to 225 and 290 to 293 each bind GTP; these read DLPGI and TKPD. Residues 290 to 293 form a G4 motif region; the sequence is TKPD. A G5 motif region spans residues 322 to 325; the sequence is KCRG. The 92-residue stretch at 619–710 folds into the GED domain; sequence ITEIGVHVNA…TLSKFAQSLQ (92 aa).

It belongs to the TRAFAC class dynamin-like GTPase superfamily. Dynamin/Fzo/YdjA family. Ubiquitous.

The protein resides in the cytoplasm. It is found in the nucleus. In terms of biological role, interferon-induced dynamin-like GTPase with antiviral activity against influenza virus A (FLUAV). The protein is Interferon-induced GTP-binding protein Mx2 (MX2) of Sus scrofa (Pig).